The sequence spans 235 residues: Maximins-S type A (235 aa).

The first 18 residues, 1–18 (MNFNYFILVLFFITSGHA), serve as a signal peptide directing secretion. 2 propeptides span residues 19–35 (KSET…HIKR) and 52–65 (SAEE…LVKR). N83 is subject to Asparagine amide. The propeptide occupies 87–100 (SAEEQDLAEDLVTR). N118 is subject to Asparagine amide. The propeptide occupies 122–135 (SAEEQDLAEDLVKR). N153 carries the asparagine amide modification. A propeptide spanning residues 157–170 (SAEEQDLAEDLVTR) is cleaved from the precursor. Residue K188 is modified to Lysine amide. Positions 192–205 (SAEDQDLAEDLVTR) are excised as a propeptide. K223 is modified (lysine amide). A propeptide spanning residues 227–235 (SAEQEKDMK) is cleaved from the precursor.

This sequence belongs to the maximin-S family. Expressed by the skin dorsal glands.

Its subcellular location is the secreted. Its function is as follows. Maximin-S1 has no antimicrobial activity. Has no hemolytic activity. Functionally, maximin-S2 has an activity against mycoplasma but has no activity against common Gram-positive and Gram-negative bacteria nor fungi. Has no hemolytic activity. In terms of biological role, maximin-S3 has an activity against mycoplasma but has no activity against common Gram-positive and Gram-negative bacteria nor fungi. Has no hemolytic activity. Maximin-S4 has an activity against mycoplasma but has no activity against common Gram-positive and Gram-negative bacteria nor fungi. Has no hemolytic activity. Its function is as follows. Maximin-S5 has an activity against mycoplasma but has no activity against common Gram-positive and Gram-negative bacteria nor fungi. Has no hemolytic activity. The protein is Maximins-S type A of Bombina maxima (Giant fire-bellied toad).